A 152-amino-acid chain; its full sequence is uncharacterized protein (152 aa).

The VOC domain occupies 7-133; it reads PALSPHLVVD…FGHHWSLGQP (127 aa).

This is an uncharacterized protein from Mycobacterium bovis (strain ATCC BAA-935 / AF2122/97).